We begin with the raw amino-acid sequence, 500 residues long: Glycerol kinase (500 aa).

Residue threonine 16 participates in ADP binding. 2 residues coordinate ATP: threonine 16 and threonine 17. Threonine 16 provides a ligand contact to sn-glycerol 3-phosphate. Arginine 20 lines the ADP pocket. 4 residues coordinate sn-glycerol 3-phosphate: arginine 86, glutamate 87, tyrosine 138, and aspartate 243. Glycerol-binding residues include arginine 86, glutamate 87, tyrosine 138, aspartate 243, and glutamine 244. The ADP site is built by threonine 265 and glycine 313. Threonine 265, glycine 313, glutamine 317, and glycine 414 together coordinate ATP. 2 residues coordinate ADP: glycine 414 and asparagine 418.

Belongs to the FGGY kinase family.

It carries out the reaction glycerol + ATP = sn-glycerol 3-phosphate + ADP + H(+). Its pathway is polyol metabolism; glycerol degradation via glycerol kinase pathway; sn-glycerol 3-phosphate from glycerol: step 1/1. Its activity is regulated as follows. Inhibited by fructose 1,6-bisphosphate (FBP). Its function is as follows. Key enzyme in the regulation of glycerol uptake and metabolism. Catalyzes the phosphorylation of glycerol to yield sn-glycerol 3-phosphate. The sequence is that of Glycerol kinase from Nostoc sp. (strain PCC 7120 / SAG 25.82 / UTEX 2576).